Consider the following 73-residue polypeptide: Large ribosomal subunit protein bL31 (73 aa).

Zn(2+)-binding residues include C16, C18, C37, and C40.

Belongs to the bacterial ribosomal protein bL31 family. Type A subfamily. In terms of assembly, part of the 50S ribosomal subunit. Requires Zn(2+) as cofactor.

Functionally, binds the 23S rRNA. In Hamiltonella defensa subsp. Acyrthosiphon pisum (strain 5AT), this protein is Large ribosomal subunit protein bL31.